Consider the following 492-residue polypeptide: Glutamyl-tRNA(Gln) amidotransferase subunit A (492 aa).

Catalysis depends on charge relay system residues lysine 78 and serine 158. The Acyl-ester intermediate role is filled by serine 182.

This sequence belongs to the amidase family. GatA subfamily. In terms of assembly, heterotrimer of A, B and C subunits.

The enzyme catalyses L-glutamyl-tRNA(Gln) + L-glutamine + ATP + H2O = L-glutaminyl-tRNA(Gln) + L-glutamate + ADP + phosphate + H(+). Functionally, allows the formation of correctly charged Gln-tRNA(Gln) through the transamidation of misacylated Glu-tRNA(Gln) in organisms which lack glutaminyl-tRNA synthetase. The reaction takes place in the presence of glutamine and ATP through an activated gamma-phospho-Glu-tRNA(Gln). In Rhodopseudomonas palustris (strain BisB5), this protein is Glutamyl-tRNA(Gln) amidotransferase subunit A.